Consider the following 332-residue polypeptide: Ribosomal RNA small subunit methyltransferase C (332 aa).

This sequence belongs to the methyltransferase superfamily. RsmC family. In terms of assembly, monomer.

It localises to the cytoplasm. The enzyme catalyses guanosine(1207) in 16S rRNA + S-adenosyl-L-methionine = N(2)-methylguanosine(1207) in 16S rRNA + S-adenosyl-L-homocysteine + H(+). Functionally, specifically methylates the guanine in position 1207 of 16S rRNA in the 30S particle. This chain is Ribosomal RNA small subunit methyltransferase C, found in Stutzerimonas stutzeri (strain A1501) (Pseudomonas stutzeri).